The primary structure comprises 559 residues: Probable D-2-hydroxyglutarate dehydrogenase, mitochondrial (559 aa).

Residues 1–80 constitute a mitochondrion transit peptide; the sequence is MARRAAAGLL…MNFEVQKRSF (80 aa). In terms of domain architecture, FAD-binding PCMH-type spans 131 to 310; the sequence is YKGSSQLLLL…TKIAILTPAK (180 aa).

The protein belongs to the FAD-binding oxidoreductase/transferase type 4 family. In terms of assembly, homodimer. Requires FAD as cofactor.

It is found in the mitochondrion. It carries out the reaction (R)-2-hydroxyglutarate + A = 2-oxoglutarate + AH2. Functionally, catalyzes the oxidation of D-2-hydroxyglutarate to alpha-ketoglutarate. The protein is Probable D-2-hydroxyglutarate dehydrogenase, mitochondrial (D2HGDH) of Oryza sativa subsp. indica (Rice).